The primary structure comprises 459 residues: Glutamate--tRNA ligase 1 (459 aa).

A 'HIGH' region motif is present at residues 8 to 18 (PSPTGYIHIGN). A 'KMSKS' region motif is present at residues 249–253 (GLSKR). Lys-252 contacts ATP.

Belongs to the class-I aminoacyl-tRNA synthetase family. Glutamate--tRNA ligase type 1 subfamily. Monomer.

It is found in the cytoplasm. The catalysed reaction is tRNA(Glu) + L-glutamate + ATP = L-glutamyl-tRNA(Glu) + AMP + diphosphate. Functionally, catalyzes the attachment of glutamate to tRNA(Glu) in a two-step reaction: glutamate is first activated by ATP to form Glu-AMP and then transferred to the acceptor end of tRNA(Glu). The protein is Glutamate--tRNA ligase 1 of Bartonella quintana (strain Toulouse) (Rochalimaea quintana).